We begin with the raw amino-acid sequence, 760 residues long: Prolyl endopeptidase FAP (760 aa).

The Cytoplasmic segment spans residues 1–4 (MKTW). The chain crosses the membrane as a helical; Signal-anchor for type II membrane protein span at residues 5–25 (LKIVFGVATSAVLALLVMCIV). Over 26–760 (LRPSRVHNSE…FLKQCFSLSD (735 aa)) the chain is Extracellular. N49, N92, and N99 each carry an N-linked (GlcNAc...) asparagine glycan. Substrate-binding residues include E203 and E204. N-linked (GlcNAc...) asparagine glycans are attached at residues N227 and N314. Disulfide bonds link C321–C332, C438–C441, and C448–C466. Residues 481 to 512 (TDQEIKILEDNKELENALKNIQLPKEEIKKLK) are a coiled coil. Residue S624 is the Charge relay system of the active site. C643 and C755 are joined by a disulfide. N-linked (GlcNAc...) asparagine glycosylation is present at N679. Active-site charge relay system residues include D702 and H734.

The protein belongs to the peptidase S9B family. In terms of assembly, homodimer; homodimerization is required for activity of both plasma membrane and soluble forms. The monomer is inactive. Heterodimer with DPP4. Interacts with PLAUR; the interaction occurs at the cell surface of invadopodia membranes. Interacts with ITGB1. Interacts with ITGA3. Associates with integrin alpha-3/beta-1; the association occurs in a collagen-dependent manner at the cell surface of invadopodia membranes. In terms of processing, N-glycosylated. Post-translationally, the N-terminus may be blocked.

It is found in the cell surface. It localises to the cell membrane. Its subcellular location is the cell projection. The protein localises to the lamellipodium membrane. The protein resides in the invadopodium membrane. It is found in the ruffle membrane. It localises to the membrane. Its subcellular location is the secreted. It catalyses the reaction Release of an N-terminal dipeptide, Xaa-Yaa-|-Zaa-, from a polypeptide, preferentially when Yaa is Pro, provided Zaa is neither Pro nor hydroxyproline.. It carries out the reaction Hydrolysis of Pro-|-Xaa &gt;&gt; Ala-|-Xaa in oligopeptides.. Its activity is regulated as follows. Gelatinase activity is inhibited by serine-protease inhibitors, such as phenylmethylsulfonyl fluoride (PMSF), 4-(2-aminoethyl)-benzenesulfonyl fluoride hydrochloride (AEBSF), 4-amidino phenylsulfonyl fluoride (APSF) and diisopropyl fluorophosphate (DFP), N-ethylmaleimide (NEM) and phenylmethylsulfonyl fluoride (PMSF). Dipeptidyl peptidase activity is inhibited by 2,2'-azino-bis(3-ethylbenzthiazoline-6-sulfonic acid), diisopropylfluorophosphate (DFP). Prolyl endopeptidase activity is inhibited by the boronic acid peptide Ac-Gly-BoroPro, Ac-Gly-Pro-chloromethyl ketone and Thr-Ser-Gly-chloromethyl ketone. Functionally, cell surface glycoprotein serine protease that participates in extracellular matrix degradation and involved in many cellular processes including tissue remodeling, fibrosis, wound healing, inflammation and tumor growth. Both plasma membrane and soluble forms exhibit post-proline cleaving endopeptidase activity, with a marked preference for Ala/Ser-Gly-Pro-Ser/Asn/Ala consensus sequences, on substrate such as alpha-2-antiplasmin SERPINF2 and SPRY2. Degrade also gelatin, heat-denatured type I collagen, but not native collagen type I and IV, vibronectin, tenascin, laminin, fibronectin, fibrin or casein. Also has dipeptidyl peptidase activity, exhibiting the ability to hydrolyze the prolyl bond two residues from the N-terminus of synthetic dipeptide substrates provided that the penultimate residue is proline, with a preference for Ala-Pro, Ile-Pro, Gly-Pro, Arg-Pro and Pro-Pro. Natural neuropeptide hormones for dipeptidyl peptidase are the neuropeptide Y (NPY), peptide YY (PYY), substance P (TAC1) and brain natriuretic peptide 32 (NPPB). The plasma membrane form, in association with either DPP4, PLAUR or integrins, is involved in the pericellular proteolysis of the extracellular matrix (ECM), and hence promotes cell adhesion, migration and invasion through the ECM. Plays a role in tissue remodeling during development and wound healing. Participates in the cell invasiveness towards the ECM in malignant melanoma cancers. Enhances tumor growth progression by increasing angiogenesis, collagen fiber degradation and apoptosis and by reducing antitumor response of the immune system. Promotes glioma cell invasion through the brain parenchyma by degrading the proteoglycan brevican. Acts as a tumor suppressor in melanocytic cells through regulation of cell proliferation and survival in a serine protease activity-independent manner. The polypeptide is Prolyl endopeptidase FAP (Bos taurus (Bovine)).